The chain runs to 115 residues: Ribonuclease P protein component (115 aa).

The protein belongs to the RnpA family. As to quaternary structure, consists of a catalytic RNA component (M1 or rnpB) and a protein subunit.

The enzyme catalyses Endonucleolytic cleavage of RNA, removing 5'-extranucleotides from tRNA precursor.. Its function is as follows. RNaseP catalyzes the removal of the 5'-leader sequence from pre-tRNA to produce the mature 5'-terminus. It can also cleave other RNA substrates such as 4.5S RNA. The protein component plays an auxiliary but essential role in vivo by binding to the 5'-leader sequence and broadening the substrate specificity of the ribozyme. This is Ribonuclease P protein component from Bacillus cereus (strain AH187).